The chain runs to 380 residues: Chorismate synthase (380 aa).

NADP(+)-binding residues include Arg40 and Arg46. FMN-binding positions include 128-130 (RSS), 247-248 (QA), Gly292, 307-311 (KPIPT), and Arg333.

This sequence belongs to the chorismate synthase family. As to quaternary structure, homotetramer. FMNH2 is required as a cofactor.

It catalyses the reaction 5-O-(1-carboxyvinyl)-3-phosphoshikimate = chorismate + phosphate. It participates in metabolic intermediate biosynthesis; chorismate biosynthesis; chorismate from D-erythrose 4-phosphate and phosphoenolpyruvate: step 7/7. Catalyzes the anti-1,4-elimination of the C-3 phosphate and the C-6 proR hydrogen from 5-enolpyruvylshikimate-3-phosphate (EPSP) to yield chorismate, which is the branch point compound that serves as the starting substrate for the three terminal pathways of aromatic amino acid biosynthesis. This reaction introduces a second double bond into the aromatic ring system. This Alkaliphilus metalliredigens (strain QYMF) protein is Chorismate synthase.